The following is a 425-amino-acid chain: UDP-N-acetylglucosamine 1-carboxyvinyltransferase (425 aa).

31-32 (KN) lines the phosphoenolpyruvate pocket. Arginine 100 contributes to the UDP-N-acetyl-alpha-D-glucosamine binding site. Cysteine 124 functions as the Proton donor in the catalytic mechanism. Position 124 is a 2-(S-cysteinyl)pyruvic acid O-phosphothioketal (cysteine 124). UDP-N-acetyl-alpha-D-glucosamine contacts are provided by residues 129–133 (RPIDQ), 170–172 (TVT), aspartate 311, and isoleucine 333.

The protein belongs to the EPSP synthase family. MurA subfamily.

It is found in the cytoplasm. The catalysed reaction is phosphoenolpyruvate + UDP-N-acetyl-alpha-D-glucosamine = UDP-N-acetyl-3-O-(1-carboxyvinyl)-alpha-D-glucosamine + phosphate. It participates in cell wall biogenesis; peptidoglycan biosynthesis. Its function is as follows. Cell wall formation. Adds enolpyruvyl to UDP-N-acetylglucosamine. This chain is UDP-N-acetylglucosamine 1-carboxyvinyltransferase, found in Aquifex aeolicus (strain VF5).